The chain runs to 255 residues: MPLTKRIIPCLDVKDGRVVKGVSFQNLRDAGDPVELAAYYQEQGADEIVFLDISATPEGRETMIEVVRRTAENLSIPLTVGGGVRSLEHIEKLLKAGADKVSINTAAVKNPLLITAAAEEFGSQAVVVAIDAKRKGNGWEVYVSAGKVPTGLDAVEWAKKAEELGAGEILLTSIDYDGTQNGYDLELTRAVSEAVKIPVIASGGAGELEHFYAVLTEGKADAALAASVFHYGKFTVGDVKKYLIQRGVPVRPCCW.

Residues aspartate 12 and aspartate 131 contribute to the active site.

The protein belongs to the HisA/HisF family. As to quaternary structure, heterodimer of HisH and HisF.

Its subcellular location is the cytoplasm. The enzyme catalyses 5-[(5-phospho-1-deoxy-D-ribulos-1-ylimino)methylamino]-1-(5-phospho-beta-D-ribosyl)imidazole-4-carboxamide + L-glutamine = D-erythro-1-(imidazol-4-yl)glycerol 3-phosphate + 5-amino-1-(5-phospho-beta-D-ribosyl)imidazole-4-carboxamide + L-glutamate + H(+). Its pathway is amino-acid biosynthesis; L-histidine biosynthesis; L-histidine from 5-phospho-alpha-D-ribose 1-diphosphate: step 5/9. Its function is as follows. IGPS catalyzes the conversion of PRFAR and glutamine to IGP, AICAR and glutamate. The HisF subunit catalyzes the cyclization activity that produces IGP and AICAR from PRFAR using the ammonia provided by the HisH subunit. The polypeptide is Imidazole glycerol phosphate synthase subunit HisF (Ignicoccus hospitalis (strain KIN4/I / DSM 18386 / JCM 14125)).